The primary structure comprises 152 residues: Protein-export protein SecB (152 aa).

The protein belongs to the SecB family. Homotetramer, a dimer of dimers. One homotetramer interacts with 1 SecA dimer.

The protein localises to the cytoplasm. Its function is as follows. One of the proteins required for the normal export of preproteins out of the cell cytoplasm. It is a molecular chaperone that binds to a subset of precursor proteins, maintaining them in a translocation-competent state. It also specifically binds to its receptor SecA. The chain is Protein-export protein SecB from Rickettsia peacockii (strain Rustic).